A 348-amino-acid chain; its full sequence is UDP-N-acetylglucosamine--N-acetylmuramyl-(pentapeptide) pyrophosphoryl-undecaprenol N-acetylglucosamine transferase (348 aa).

UDP-N-acetyl-alpha-D-glucosamine contacts are provided by residues 11–13 (TGG), N120, R161, S187, and Q281.

The protein belongs to the glycosyltransferase 28 family. MurG subfamily.

It is found in the cell inner membrane. It carries out the reaction di-trans,octa-cis-undecaprenyl diphospho-N-acetyl-alpha-D-muramoyl-L-alanyl-D-glutamyl-meso-2,6-diaminopimeloyl-D-alanyl-D-alanine + UDP-N-acetyl-alpha-D-glucosamine = di-trans,octa-cis-undecaprenyl diphospho-[N-acetyl-alpha-D-glucosaminyl-(1-&gt;4)]-N-acetyl-alpha-D-muramoyl-L-alanyl-D-glutamyl-meso-2,6-diaminopimeloyl-D-alanyl-D-alanine + UDP + H(+). It functions in the pathway cell wall biogenesis; peptidoglycan biosynthesis. Its function is as follows. Cell wall formation. Catalyzes the transfer of a GlcNAc subunit on undecaprenyl-pyrophosphoryl-MurNAc-pentapeptide (lipid intermediate I) to form undecaprenyl-pyrophosphoryl-MurNAc-(pentapeptide)GlcNAc (lipid intermediate II). The sequence is that of UDP-N-acetylglucosamine--N-acetylmuramyl-(pentapeptide) pyrophosphoryl-undecaprenol N-acetylglucosamine transferase from Crocosphaera subtropica (strain ATCC 51142 / BH68) (Cyanothece sp. (strain ATCC 51142)).